Reading from the N-terminus, the 1228-residue chain is DNA-directed RNA polymerase subunit beta (1228 aa).

This sequence belongs to the RNA polymerase beta chain family. As to quaternary structure, the RNAP catalytic core consists of 2 alpha, 1 beta, 1 beta' and 1 omega subunit. When a sigma factor is associated with the core the holoenzyme is formed, which can initiate transcription.

The enzyme catalyses RNA(n) + a ribonucleoside 5'-triphosphate = RNA(n+1) + diphosphate. DNA-dependent RNA polymerase catalyzes the transcription of DNA into RNA using the four ribonucleoside triphosphates as substrates. The protein is DNA-directed RNA polymerase subunit beta of Leptospira biflexa serovar Patoc (strain Patoc 1 / Ames).